A 280-amino-acid polypeptide reads, in one-letter code: MNAAAPRAFVVGWPIAHSRSPIIHNYWLHQLGLAGRYEAVAVAPPDFADFAQNLAARGFVGGNVTLPHKQNAFGLVAEATHSARRLEAVNTLWIEDGRLYGDNTDSEGFLCALDEAAPGWEAIPGEAVVLGAGGAARAIVAALIDRGRSVVLANRTRARAEAIAAHFGDAPKVIDWRDLPAALKTAGLLVNTTSLGMKGQPPLDLDVALLPQDAVVHDIVYFPLETALLRAARARGLRVAPGLGMLLHQAAPAFARWFATRPKVTPELRRLVEADIEKAL.

Residues 18-20 (SRS) and Thr65 each bind shikimate. The active-site Proton acceptor is the Lys69. 2 residues coordinate shikimate: Asn90 and Asp105. NADP(+) is bound by residues 131-135 (GAGGA), 154-159 (NRTRAR), and Ile219. Tyr221 serves as a coordination point for shikimate. Gly242 contacts NADP(+).

Belongs to the shikimate dehydrogenase family. Homodimer.

The enzyme catalyses shikimate + NADP(+) = 3-dehydroshikimate + NADPH + H(+). Its pathway is metabolic intermediate biosynthesis; chorismate biosynthesis; chorismate from D-erythrose 4-phosphate and phosphoenolpyruvate: step 4/7. Its function is as follows. Involved in the biosynthesis of the chorismate, which leads to the biosynthesis of aromatic amino acids. Catalyzes the reversible NADPH linked reduction of 3-dehydroshikimate (DHSA) to yield shikimate (SA). This Methylocella silvestris (strain DSM 15510 / CIP 108128 / LMG 27833 / NCIMB 13906 / BL2) protein is Shikimate dehydrogenase (NADP(+)).